We begin with the raw amino-acid sequence, 127 residues long: Thioredoxin-3, mitochondrial (127 aa).

The transit peptide at 1–21 (MLFYKPVMRMAVRPLKSIRFQ) directs the protein to the mitochondrion. Residues 22–127 (SSYTSITKLT…TALEKGIKDL (106 aa)) enclose the Thioredoxin domain. Catalysis depends on nucleophile residues cysteine 55 and cysteine 58. A disulfide bond links cysteine 55 and cysteine 58.

Belongs to the thioredoxin family.

The protein localises to the mitochondrion. The protein is Thioredoxin-3, mitochondrial (TRX3) of Saccharomyces cerevisiae (strain ATCC 204508 / S288c) (Baker's yeast).